The sequence spans 916 residues: DNA topoisomerase 1 alpha (916 aa).

The tract at residues 1-369 is disordered; that stretch reads MGTETVSKPV…SSPSSGDGQK (369 aa). A compositionally biased stretch (low complexity) spans 34–47; the sequence is SNSNQSKSNSQRSK. The segment covering 60–76 has biased composition (polar residues); that stretch reads PVTSPNGTTPSNKTSIV. Residues 77-93 are compositionally biased toward low complexity; sequence KSSMPSSSSKASPAKSP. Residues 102 to 119 are compositionally biased toward basic and acidic residues; sequence VKDRSQLQKDQSECKIEH. Residues 130-148 show a composition bias toward polar residues; sequence SILSGNKGPTSSRQVSSPQ. Over residues 149–168 the composition is skewed to basic and acidic residues; that stretch reads PEKKNNGDRPLDRASRIIKD. At Ser170 the chain carries Phosphoserine. A compositionally biased stretch (polar residues) spans 230-239; it reads KNSSADQSSL. A compositionally biased stretch (basic and acidic residues) spans 253–267; sequence MKQDSVKKEIDDKGR. Positions 285 to 294 are enriched in acidic residues; that stretch reads GTDDDDDDDV. Residue Thr286 is modified to Phosphothreonine. The segment covering 354-366 has biased composition (low complexity); sequence YSTSSKSSPSSGD. Interaction with DNA stretches follow at residues 577–578, 640–645, and 731–733; these read KY, RAGNEK, and TAK. The Topo IB-type catalytic domain occupies 584-914; that stretch reads GSSLKGLSDK…MDVEPEYRFS (331 aa). A coiled-coil region spans residues 778–860; it reads QRTVSKTHGA…ERDMHTKEDL (83 aa). Tyr872 functions as the O-(3'-phospho-DNA)-tyrosine intermediate in the catalytic mechanism.

The protein belongs to the type IB topoisomerase family. As to quaternary structure, interacts with DEK3. Expressed in inflorescence meristems. Expressed in primordia of sepals, petals, stamens, carpels and ovules. Expressed in midstage embryos.

The protein localises to the nucleus. It catalyses the reaction ATP-independent breakage of single-stranded DNA, followed by passage and rejoining.. In terms of biological role, releases the supercoiling and torsional tension of DNA introduced during the DNA replication and transcription by transiently cleaving and rejoining one strand of the DNA duplex. Introduces a single-strand break via transesterification at a target site in duplex DNA. The scissile phosphodiester is attacked by the catalytic tyrosine of the enzyme, resulting in the formation of a DNA-(3'-phosphotyrosyl)-enzyme intermediate and the expulsion of a 5'-OH DNA strand. The free DNA strand then rotates around the intact phosphodiester bond on the opposing strand, thus removing DNA supercoils. Finally, in the religation step, the DNA 5'-OH attacks the covalent intermediate to expel the active-site tyrosine and restore the DNA phosphodiester backbone. Can complement a TOP1-deficient yeast mutant. Plays a critical role in the maintenance of a regular pattern of organ initiation. Topoisomerases I enzymes (TOP1A and TOP1B) are essential for plant survival. Functions together with the stem cell maintenance gene WUSCHEL (WUS) in stem cell regulation. Required to maintain developmentally regulated gene repression. Functions synergistically with chromatin remodeling factors. Is required for the repression of WUS expression in flower development. Plays a role in polycomb group (PcG) protein-mediated histone H3 trimethylation on 'Lys-27' (H3K27me3) at the WUS gene locus. H3K27me3 induces transcriptional repression of WUS. May assist AGAMOUS (AG) in recruiting PcG proteins to WUS locus. Reduces nucleosome density, especially at genes that are targets of PcG proteins. Plays a role in epigenetic silencing. Involved in RNA-directed DNA methylation (RdDM) by promoting Pol V transcription to generate long non-coding RNA transcripts. Is dispensable for Pol IV-mediated small interfering RNA (siRNA) biogenesis. Promotes transposable element (TE) silencing at endogenous RdDM target loci through histone H3 dimethylation of 'Lys-9' (H3K9me2). Promotes the production of Pol V-dependent long non-coding transcripts that facilitate the recruitment of siRNA-AGO4 and AGO4 occupancy at TEs. This Arabidopsis thaliana (Mouse-ear cress) protein is DNA topoisomerase 1 alpha.